The sequence spans 690 residues: Protease 2 (690 aa).

Active-site charge relay system residues include Ser-534, Asp-619, and His-654.

This sequence belongs to the peptidase S9A family.

The enzyme catalyses Hydrolysis of -Arg-|-Xaa- and -Lys-|-Xaa- bonds in oligopeptides, even when P1' residue is proline.. Its function is as follows. Cleaves peptide bonds on the C-terminal side of lysyl and argininyl residues. In Moraxella lacunata, this protein is Protease 2 (ptrB).